The primary structure comprises 516 residues: uncharacterized protein (516 aa).

The 155-residue stretch at Ala-31–Phe-185 folds into the uDENN domain. The region spanning His-211–Gly-365 is the cDENN domain. Residues Leu-367–Gly-513 enclose the dDENN domain. 2 S-palmitoyl cysteine lipidation sites follow: Cys-511 and Cys-516.

In terms of processing, palmitoylated by AKR1.

Its subcellular location is the lipid droplet. In terms of biological role, may be involved in lipid metabolism. This is an uncharacterized protein from Saccharomyces cerevisiae (strain ATCC 204508 / S288c) (Baker's yeast).